A 764-amino-acid chain; its full sequence is Nucleolar transcription factor 1 (764 aa).

Met1 is subject to N-acetylmethionine. A disordered region spans residues 1–21; it reads MNGEADCPTDLEMAAPKGQDR. 2 DNA-binding regions (HMG box) span residues 112–180 and 196–264; these read PKKP…ARFR and PEKP…RDYI. Thr201 is subject to Phosphothreonine. A phosphoserine mark is found at Ser273, Ser336, Ser364, Ser389, Ser412, Ser433, Ser435, Ser484, Ser495, Ser546, Ser584, and Ser638. The HMG box 3 DNA-binding region spans 298–362; the sequence is TKPPPNSYSL…DYEVELLRFL (65 aa). Residues 381–411 are disordered; that stretch reads NINKKQATSPASKKPAQEGGKGGSEKPKRPV. DNA-binding regions (HMG box) lie at residues 407–475, 482–549, and 568–634; these read PKRP…GGER, PESP…SEMR, and KKPP…DLWV. The interval 459–487 is disordered; the sequence is REAALKAQSERKPGGEREERGKLPESPKR. Positions 546-576 are disordered; sequence SEMRAPPAATNSSKKMKFQGEPKKPPMNGYQ. A disordered region spans residues 648 to 764; it reads YISNKRKSMT…SGDSSDSDSN (117 aa). Residues 664 to 674 are compositionally biased toward polar residues; the sequence is PKSSRTTLQSK. A compositionally biased stretch (acidic residues) spans 677 to 745; the sequence is SEEDDEEDED…DDDEDEDNES (69 aa). Positions 746 to 758 are enriched in low complexity; sequence EGSSSSSSSSGDS.

In terms of assembly, homodimer. Part of Pol I pre-initiation complex (PIC), in which Pol I core assembles with RRN3 and promoter-bound UTBF and SL1/TIF-IB complex. Interacts with TOP2A in the context of Pol I complex. Interacts with TBP. Interacts with TAF1A. Interacts with RASL11A. Binds to IRS1 and PIK3CA. Interacts with DHX33. Interacts with PHF6. Interacts with CEBPA (isoform 1 and isoform 4). Interacts with DDX11. Interacts with NOP53. Interacts with ALKBH2. Post-translationally, phosphorylated and activated by PIK3CA.

The protein resides in the nucleus. It is found in the nucleolus. Functionally, recognizes the ribosomal RNA gene promoter and activates transcription mediated by RNA polymerase I (Pol I) through cooperative interactions with the transcription factor SL1/TIF-IB complex. It binds specifically to the upstream control element and can activate Pol I promoter escape. The sequence is that of Nucleolar transcription factor 1 (UBTF) from Homo sapiens (Human).